The sequence spans 627 residues: Carene synthase, chloroplastic (627 aa).

The transit peptide at 1–36 (MSVISIMPLASKPCLNKSFISSTHEPKALRRPISTV) directs the protein to the chloroplast. Aspartate 378, aspartate 382, and aspartate 530 together coordinate Mg(2+). Positions 378–382 (DDMYD) match the DDXXD motif motif.

This sequence belongs to the terpene synthase family. Tpsd subfamily. Mg(2+) is required as a cofactor. It depends on Mn(2+) as a cofactor.

The protein localises to the plastid. It is found in the chloroplast. It catalyses the reaction (2E)-geranyl diphosphate = (+)-car-3-ene + diphosphate. The protein operates within terpene metabolism; oleoresin biosynthesis. Its function is as follows. Terpene synthase (TPS) involved in defensive oleoresin formation in conifers in response to insect attack or other injury. This chain is Carene synthase, chloroplastic (3CAR), found in Picea glauca (White spruce).